A 782-amino-acid chain; its full sequence is uncharacterized protein (782 aa).

Disordered regions lie at residues 1–25 (MFSP…STTS) and 175–195 (RPRT…EDLR). Residues 13–25 (ESESVSNCESTTS) are compositionally biased toward low complexity. Residues 183 to 195 (RAGDASMSREDLR) show a composition bias toward basic and acidic residues. Coiled-coil stretches lie at residues 223 to 331 (RENR…STLN), 348 to 398 (LSQF…VSTL), 428 to 601 (NRIN…QLLN), and 699 to 743 (TIET…IIAK). Residues 748–782 (NIPKTEKSSPMKKVPPIENFRAKSQTSITGLSPVL) form a disordered region. Residues 769 to 782 (AKSQTSITGLSPVL) are compositionally biased toward polar residues.

This is an uncharacterized protein from Caenorhabditis elegans.